Here is a 98-residue protein sequence, read N- to C-terminus: MKINQPAVAGTLESGDVMIRIAPLDTQDIDLQINSSVEKQFGDAIRTTILDVLARYNVRGVQLNVDDKGTLDCILRARLEALLARASGIPTLPWEDCQ.

Residue serine 14 is modified to O-(phosphoribosyl dephospho-coenzyme A)serine.

Belongs to the CitD family. As to quaternary structure, oligomer with a subunit composition of (alpha,beta,gamma)6.

The protein resides in the cytoplasm. In terms of biological role, covalent carrier of the coenzyme of citrate lyase. The protein is Citrate lyase acyl carrier protein of Shigella boydii serotype 4 (strain Sb227).